The following is a 333-amino-acid chain: Autoinducer 2 import system permease protein LsrD (333 aa).

A run of 10 helical transmembrane segments spans residues 7–27 (YGWELTLAALLVLEILLFGLS), 45–65 (ICIGIVALPLTMVIVSGGIDI), 67–87 (FGSTIGLCAIFLGIVFQAGVP), 90–110 (VAIPLTVLVGALCGLINAGLI), 118–138 (LVITLGTLYLFGGSALLLSGL), 162–182 (LFGLPIPLVIFMLCVLLFWLL), 212–232 (TLCMLYAMTGVASAISAILLV), 240–260 (SDLGASFLMPAITAVVLGGAN), 261–281 (IYGGSGSILGTALAVLLVGYL), and 288–308 (IGTPNQISSALSGALLILVVV).

This sequence belongs to the binding-protein-dependent transport system permease family. AraH/RbsC subfamily. The complex is composed of two ATP-binding proteins (LsrA), two transmembrane proteins (LsrC and LsrD) and a solute-binding protein (LsrB).

The protein localises to the cell inner membrane. Its function is as follows. Part of the ABC transporter complex LsrABCD involved in autoinducer 2 (AI-2) import. Probably responsible for the translocation of the substrate across the membrane. This Yersinia pestis bv. Antiqua (strain Antiqua) protein is Autoinducer 2 import system permease protein LsrD (lsrD).